A 140-amino-acid polypeptide reads, in one-letter code: 3-hydroxyacyl-[acyl-carrier-protein] dehydratase FabZ (140 aa).

The active site involves His-48.

This sequence belongs to the thioester dehydratase family. FabZ subfamily.

The protein resides in the cytoplasm. It carries out the reaction a (3R)-hydroxyacyl-[ACP] = a (2E)-enoyl-[ACP] + H2O. Involved in unsaturated fatty acids biosynthesis. Catalyzes the dehydration of short chain beta-hydroxyacyl-ACPs and long chain saturated and unsaturated beta-hydroxyacyl-ACPs. This is 3-hydroxyacyl-[acyl-carrier-protein] dehydratase FabZ from Ligilactobacillus salivarius (strain UCC118) (Lactobacillus salivarius).